A 549-amino-acid polypeptide reads, in one-letter code: MPLSPAGVLSSTSTASNRSRNRPRYRTKALSSEVDESLFGGIKPLNQSDSPIVLLRDKHAIRKTLTALGLDHKPETIQLITRDMVRELIIPTKDPSGESLIMSPEEFERIRWASHVPTREELEAKEQACKKEKEAIVDAVTTRKKIMKQKEMVSRNNQKLSDLEEVAKERAQNLLQRASQLRMEQEEELKDMKKIILNAKCHAIRDAQILEKQLIQKELDAEEKRLDQMMEVERQKSIQRQEELDKKRREERIRGRRHIVEQMEKNQEERSLLAEQREQEKEQMLEYMEQLQEEDLRDLERRHQQKLKMQAEIKRINDENQKQKAELLAQEKLADQMVMEFTKKKMAREAEFEAEQERIRREKEKEISRLRALQEKVQDYQAEQDALRAKRNQEVADREWRRKEKENAQKKMETEAQLRKSRLEQVAFKEHSLAVQVQRDRDEFERILRAQREQIEKEQQEEEKKAMERLQHANELRRQVRENQQKQVQDRIAIFEEGQRLKEEAQKRRERIEGIKKKKIEELRATGLPEKYCIEAERKANIPTNTSVN.

The tract at residues 1–29 (MPLSPAGVLSSTSTASNRSRNRPRYRTKA) is disordered. Coiled coils occupy residues 119-232 (REEL…MMEV), 259-393 (IVEQ…KRNQ), and 434-522 (AVQV…KIEE). Residues 388–416 (RAKRNQEVADREWRRKEKENAQKKMETEA) form a disordered region.

It belongs to the CFAP45 family. Microtubule inner protein component of sperm flagellar doublet microtubules. Interacts with AK8; dimerization with AK8 may create a cavity at the interface of the dimer that can accommodate AMP. Interacts with CFAP52. Interacts with ENKUR. Directly interacts with DNALI1. Interacts with DNAH11. Interacts with DNAI1. Expressed in respiratory cells (at protein level).

It localises to the cytoplasm. It is found in the cytoskeleton. The protein localises to the cilium axoneme. Its subcellular location is the flagellum axoneme. The protein resides in the cell projection. It localises to the cilium. It is found in the flagellum. Its function is as follows. Microtubule inner protein (MIP) part of the dynein-decorated doublet microtubules (DMTs) in cilia axoneme, which is required for motile cilia beating. It is an AMP-binding protein that may facilitate dynein ATPase-dependent ciliary and flagellar beating via adenine nucleotide homeostasis. May function as a donor of AMP to AK8 and hence promote ADP production. In Sus scrofa (Pig), this protein is Cilia- and flagella-associated protein 45 (CFAP45).